A 71-amino-acid polypeptide reads, in one-letter code: Large ribosomal subunit protein uL29 (71 aa).

It belongs to the universal ribosomal protein uL29 family.

This Synechococcus sp. (strain RCC307) protein is Large ribosomal subunit protein uL29.